A 419-amino-acid polypeptide reads, in one-letter code: Zinc finger CCCH domain-containing protein 62 (419 aa).

The C3H1-type zinc finger occupies 89-116 (SLRKWVCKYWKDGKCKRGEQCQFLHSWS). WD repeat units lie at residues 129 to 168 (GHNK…CVHS), 210 to 247 (GVVG…ESDP), 256 to 293 (GHSG…CIMT), 296 to 335 (QHTG…KVVQ), and 383 to 419 (FSTH…GNKV).

The chain is Zinc finger CCCH domain-containing protein 62 (ZFWD4) from Arabidopsis thaliana (Mouse-ear cress).